Reading from the N-terminus, the 441-residue chain is MGEKPNRIGRANISYINHDHIFLPSFQPSYPSRQLHPLISSQNKVHSSIVHLPKVASPSSPETQQHSQAPLFITHIMSGLPQALASGFAARVREGGTTLYINTTPMLRSARHNTAVNYAEFEEDFDANDFEDDDDDDQSQRESRDGSEEAEGDEDGTKKEEQDKFAGLKAPLVSNEPKRAAPPVRPVMYPQEVLEELSQVKEPTLIPIRVAVENIDVFRVQDFFLWDADEKILTPEQFATLTCADLDVPIGYSAQMSAQIKKQLAEYTAAPALPKDVEVHVIVELAVTVDKIVYEDKFEWDLSGEYATPQEFARTVVQDLGLGQEFYPAITYQLYETLGKLQKAWLERSIPLDVDNRAAFGLEAGLRVDQDNLGESWVPRVEEMTPEEMQKREMERDRSSRRLKRESARMAEVPYVDLDSLYSRKRRRRFDEDSRSGSPMW.

A compositionally biased stretch (acidic residues) spans 124-137 (DFDANDFEDDDDDD). Disordered stretches follow at residues 124-183 (DFDA…AAPP) and 383-407 (EMTP…KRES). 2 stretches are compositionally biased toward basic and acidic residues: residues 138–147 (QSQRESRDGS) and 155–166 (DGTKKEEQDKFA).

Belongs to the SNF5 family.

The protein resides in the nucleus. Part of the chromatin structure-remodeling complex (RSC) which is involved in transcription regulation and nucleosome positioning. RSC is responsible for the transfer of a histone octamer from a nucleosome core particle to naked DNA. The reaction requires ATP and involves an activated RSC-nucleosome intermediate. Remodeling reaction also involves DNA translocation, DNA twist and conformational change. As a reconfigurer of centromeric and flanking nucleosomes, RSC complex is required both for proper kinetochore function in chromosome segregation and, via a PKC1-dependent signaling pathway, for organization of the cellular cytoskeleton. This subunit is essential for mitotic growth and required for cell cycle progression. In Yarrowia lipolytica (strain CLIB 122 / E 150) (Yeast), this protein is Chromatin structure-remodeling complex subunit SFH1 (SFH1).